The primary structure comprises 82 residues: Omega-conotoxin-like TxMKLT1-031 (82 aa).

The N-terminal stretch at 1-22 (MKLTCMMIVAVLFLTAWTLVMA) is a signal peptide. Positions 23–49 (DDSNNGLANLFSKSRDEMEDPEASKLE) are excised as a propeptide. Disulfide bonds link Cys53/Cys71, Cys60/Cys76, and Cys70/Cys81.

This sequence belongs to the conotoxin O1 superfamily. Expressed by the venom duct.

Its subcellular location is the secreted. Functionally, omega-conotoxins act at presynaptic membranes, they bind and block voltage-gated calcium channels (Cav). The protein is Omega-conotoxin-like TxMKLT1-031 of Conus textile (Cloth-of-gold cone).